The following is a 252-amino-acid chain: 3-dehydroquinate dehydratase (252 aa).

Residues Ser-21, 46–48, and Arg-82 each bind 3-dehydroquinate; that span reads EWR. His-143 functions as the Proton donor/acceptor in the catalytic mechanism. Lys-170 serves as the catalytic Schiff-base intermediate with substrate. Residues Arg-213, Ser-232, and Gln-236 each coordinate 3-dehydroquinate.

The protein belongs to the type-I 3-dehydroquinase family. Homodimer.

The catalysed reaction is 3-dehydroquinate = 3-dehydroshikimate + H2O. The protein operates within metabolic intermediate biosynthesis; chorismate biosynthesis; chorismate from D-erythrose 4-phosphate and phosphoenolpyruvate: step 3/7. In terms of biological role, involved in the third step of the chorismate pathway, which leads to the biosynthesis of aromatic amino acids. Catalyzes the cis-dehydration of 3-dehydroquinate (DHQ) and introduces the first double bond of the aromatic ring to yield 3-dehydroshikimate. The polypeptide is 3-dehydroquinate dehydratase (Shigella flexneri serotype 5b (strain 8401)).